The following is a 179-amino-acid chain: Large ribosomal subunit protein uL5 (179 aa).

This sequence belongs to the universal ribosomal protein uL5 family. As to quaternary structure, part of the 50S ribosomal subunit; part of the 5S rRNA/L5/L18/L25 subcomplex. Contacts the 5S rRNA and the P site tRNA. Forms a bridge to the 30S subunit in the 70S ribosome.

Functionally, this is one of the proteins that bind and probably mediate the attachment of the 5S RNA into the large ribosomal subunit, where it forms part of the central protuberance. In the 70S ribosome it contacts protein S13 of the 30S subunit (bridge B1b), connecting the 2 subunits; this bridge is implicated in subunit movement. Contacts the P site tRNA; the 5S rRNA and some of its associated proteins might help stabilize positioning of ribosome-bound tRNAs. The sequence is that of Large ribosomal subunit protein uL5 from Xylella fastidiosa (strain M12).